The chain runs to 65 residues: White colony protein WHS11 (65 aa).

The segment covering 1–17 has biased composition (basic and acidic residues); that stretch reads MSDLGRKDIGDKIESKL. The segment at 1–32 is disordered; it reads MSDLGRKDIGDKIESKLTPDSQKSTPEQFKDK. The segment covering 18–27 has biased composition (polar residues); the sequence is TPDSQKSTPE.

It to yeast HSP12/GLP1 and S.pombe hsp9.

The polypeptide is White colony protein WHS11 (WHS11) (Candida albicans (strain WO-1) (Yeast)).